The chain runs to 273 residues: Large ribosomal subunit protein uL2 (273 aa).

The interval 221-262 (RGTAMNPVDHPHGGGEGRNFGKHPVTPWGVQTKGKKTRHNKR) is disordered. The segment covering 253–262 (KGKKTRHNKR) has biased composition (basic residues).

Belongs to the universal ribosomal protein uL2 family. Part of the 50S ribosomal subunit. Forms a bridge to the 30S subunit in the 70S ribosome.

One of the primary rRNA binding proteins. Required for association of the 30S and 50S subunits to form the 70S ribosome, for tRNA binding and peptide bond formation. It has been suggested to have peptidyltransferase activity; this is somewhat controversial. Makes several contacts with the 16S rRNA in the 70S ribosome. In Haemophilus influenzae (strain ATCC 51907 / DSM 11121 / KW20 / Rd), this protein is Large ribosomal subunit protein uL2.